The following is a 331-amino-acid chain: Oxygen-evolving enhancer protein 1-2, chloroplastic (331 aa).

The N-terminal 57 residues, 1–57 (MATSLQAAATFLQPAKIAASPSRNVHLRSNQTVGKSFGLDSSQARLTCSLHSDLKDF), are a transit peptide targeting the chloroplast. Residues 58–84 (AGKCSDAAKIAGFALATSALVVSGAGA) constitute a thylakoid transit peptide.

This sequence belongs to the PsbO family.

The protein resides in the plastid. It localises to the chloroplast thylakoid membrane. Functionally, stabilizes the manganese cluster which is the primary site of water splitting. Regulates dephosphorylation and turnover of the PSII reaction center D1 protein. The chain is Oxygen-evolving enhancer protein 1-2, chloroplastic (PSBO2) from Arabidopsis thaliana (Mouse-ear cress).